The sequence spans 277 residues: Cis-3,4-dihydrophenanthrene-3,4-diol dehydrogenase (277 aa).

Residues 10 to 37 and D60 each bind NAD(+); that span reads FLTGGVAGLGRALVKRLVEEGANVTVLD. S143 contributes to the substrate binding site. Residue Y156 is the Proton acceptor of the active site. NAD(+) is bound at residue K160.

This sequence belongs to the short-chain dehydrogenases/reductases (SDR) family. As to quaternary structure, homotetramer.

The enzyme catalyses (3S,4R)-3,4-dihydrophenanthrene-3,4-diol + NAD(+) = phenanthrene-3,4-diol + NADH + H(+). With respect to regulation, inhibited by heavy metal such as Hg(2+) and by p-chloromercuribenzoate. In terms of biological role, involved in the degradation of phenanthrene. Catalyzes the oxidation of cis-phenanthrene dihydrodiol (PDD) to yield phenanthrenediol. It can use either NAD or NADP as electron acceptor, however NAD is preferred to NADP. This Alcaligenes faecalis protein is Cis-3,4-dihydrophenanthrene-3,4-diol dehydrogenase (phnB).